We begin with the raw amino-acid sequence, 248 residues long: MAVTDLSLTNSSLMPTLNPMIQQLALAIAASWQSLPLKPYQLPEDLGYVEGRLEGEKLVIENRCYQTPQFRKMHLELAKVGKGLDILHCVMFPEPLYGLPLFGCDIVAGPGGVSAAIADLSPTQSDRQLPAAYQKSLAELGQPEFEQQRELPPWGEIFSEYCLFIRPSNVTEEERFVQRVVDFLQIHCHQSIVAEPLSEAQTLEHRQGQIHYCQQQQKNDKTRRVLEKAFGEAWAERYMSQVLFDVIQ.

Belongs to the HY2 family.

The catalysed reaction is (2R,3Z)-phycocyanobilin + 4 oxidized [2Fe-2S]-[ferredoxin] = biliverdin IXalpha + 4 reduced [2Fe-2S]-[ferredoxin] + 4 H(+). Functionally, catalyzes the four-electron reduction of biliverdin IX-alpha (2-electron reduction at both the A and D rings); the reaction proceeds via an isolatable 2-electron intermediate, 181,182-dihydrobiliverdin. This chain is Phycocyanobilin:ferredoxin oxidoreductase (pcyA), found in Synechocystis sp. (strain ATCC 27184 / PCC 6803 / Kazusa).